We begin with the raw amino-acid sequence, 256 residues long: 5-oxoprolinase subunit A (256 aa).

The protein belongs to the LamB/PxpA family. As to quaternary structure, forms a complex composed of PxpA, PxpB and PxpC.

It carries out the reaction 5-oxo-L-proline + ATP + 2 H2O = L-glutamate + ADP + phosphate + H(+). Its function is as follows. Catalyzes the cleavage of 5-oxoproline to form L-glutamate coupled to the hydrolysis of ATP to ADP and inorganic phosphate. This chain is 5-oxoprolinase subunit A, found in Alkaliphilus metalliredigens (strain QYMF).